Here is a 376-residue protein sequence, read N- to C-terminus: Putative glutamate--cysteine ligase 2-1 (376 aa).

It belongs to the glutamate--cysteine ligase type 2 family. YbdK subfamily.

It catalyses the reaction L-cysteine + L-glutamate + ATP = gamma-L-glutamyl-L-cysteine + ADP + phosphate + H(+). Functionally, ATP-dependent carboxylate-amine ligase which exhibits weak glutamate--cysteine ligase activity. This is Putative glutamate--cysteine ligase 2-1 from Mycobacterium sp. (strain JLS).